A 554-amino-acid chain; its full sequence is Urocanate hydratase (554 aa).

NAD(+) is bound by residues G52–G53, Q130, G176–G178, E196, R201, N242–A243, Q263–H267, Y273–L274, and Y322. C410 is an active-site residue. Residue G492 coordinates NAD(+).

It belongs to the urocanase family. Requires NAD(+) as cofactor.

Its subcellular location is the cytoplasm. The catalysed reaction is 4-imidazolone-5-propanoate = trans-urocanate + H2O. It functions in the pathway amino-acid degradation; L-histidine degradation into L-glutamate; N-formimidoyl-L-glutamate from L-histidine: step 2/3. Its function is as follows. Catalyzes the conversion of urocanate to 4-imidazolone-5-propionate. This Shewanella halifaxensis (strain HAW-EB4) protein is Urocanate hydratase.